The primary structure comprises 110 residues: Quaternary ammonium compound-resistance protein QacE (110 aa).

The next 4 helical transmembrane spans lie at 1-21 (MKGWLFLVIAIVGEVIATSAL), 30-50 (LAPSAVVIIGYGIAFYFLSLV), 58-78 (VAYAVWSGLGVVIITAIAWLL), and 85-105 (AWGFVGMGLIVSGVVVLNLLS).

The protein belongs to the drug/metabolite transporter (DMT) superfamily. Small multidrug resistance (SMR) (TC 2.A.7.1) family.

The protein localises to the cell membrane. Its function is as follows. Multidrug exporter. Is implicated for the resistance to bacteriocidal quaternary ammonium compounds. In Escherichia coli, this protein is Quaternary ammonium compound-resistance protein QacE (qacE).